A 362-amino-acid polypeptide reads, in one-letter code: MATETQIRIGVMGCADIARKVSRAIHLAPNATISGVASRSLEKAKAFATANNYPESTKIHGSYESLLEDPEIDALYVPLPTSLHVEWAIKAAEKGKHILLEKPVAMNVTEFDKIVDACEANGVQIMDGTMWVHNPRTALLKEFLSDSERFGQLKTVQSCFSFAGDEDFLKNDIRVKPGLDGLGALGDAGWYAIRATLLANNFELPKTVTAFPGAVLNEAGVILSCGASLSWEDGRTATIYCSFLANLTMEITAIGTKGTLRVHDFIIPYKETEASFTTSTKAWFNDLVTAWVSPPSEHTVKTELPQEACMVREFARLVGEIKNNGAKPDGYWPSISRKTQLVVDAVKESVDKNYQQISLSGR.

The residue at position 2 (A2) is an N-acetylalanine.

The protein belongs to the Gfo/Idh/MocA family. Homodimer.

This is an uncharacterized protein from Arabidopsis thaliana (Mouse-ear cress).